Here is a 742-residue protein sequence, read N- to C-terminus: Photosystem I P700 chlorophyll a apoprotein A2 (742 aa).

8 consecutive transmembrane segments (helical) span residues 46–69 (LFST…FHIA), 135–158 (LFQG…LHLQ), 175–199 (LNHH…HVAI), 273–291 (IAHH…GHMY), 336–359 (LHFQ…QHMG), 375–401 (SALY…IFFV), 423–445 (ALIS…IYVH), and 525–543 (FLVH…LILI). Residues cysteine 567 and cysteine 576 each contribute to the [4Fe-4S] cluster site. 2 consecutive transmembrane segments (helical) span residues 583–604 (ATYL…YWHW) and 651–673 (LSPW…MFLI). Residues histidine 662, methionine 670, and tyrosine 678 each coordinate divinyl chlorophyll a. Tryptophan 679 contributes to the phylloquinone binding site. A helical transmembrane segment spans residues 715–735 (LVGLTHFTVGNFVTFGAFVIA).

Belongs to the PsaA/PsaB family. As to quaternary structure, the PsaA/B heterodimer binds the P700 divinyl chlorophyll special pair and subsequent electron acceptors. PSI consists of a core antenna complex that captures photons, and an electron transfer chain that converts photonic excitation into a charge separation. The cyanobacterial PSI reaction center is composed of one copy each of PsaA,B,C,D,E,F,I,J,K,L,M and X, and forms trimeric complexes. It depends on PSI electron transfer chain: 5 divinyl chlorophyll a, 1 divinyl chlorophyll a', 2 phylloquinones and 3 4Fe-4S clusters. PSI core antenna: 90 divinyl chlorophyll a, 22 carotenoids, 3 phospholipids and 1 galactolipid. P700 is a divinyl chlorophyll a/divinyl chlorophyll a' dimer, A0 is one or more divinyl chlorophyll a, A1 is one or both phylloquinones and FX is a shared 4Fe-4S iron-sulfur center. as a cofactor.

The protein localises to the cellular thylakoid membrane. The enzyme catalyses reduced [plastocyanin] + hnu + oxidized [2Fe-2S]-[ferredoxin] = oxidized [plastocyanin] + reduced [2Fe-2S]-[ferredoxin]. Functionally, psaA and PsaB bind P700, the primary electron donor of photosystem I (PSI), as well as the electron acceptors A0, A1 and FX. PSI is a plastocyanin/cytochrome c6-ferredoxin oxidoreductase, converting photonic excitation into a charge separation, which transfers an electron from the donor P700 chlorophyll pair to the spectroscopically characterized acceptors A0, A1, FX, FA and FB in turn. Oxidized P700 is reduced on the lumenal side of the thylakoid membrane by plastocyanin or cytochrome c6. The polypeptide is Photosystem I P700 chlorophyll a apoprotein A2 (Prochlorococcus marinus (strain NATL2A)).